The sequence spans 277 residues: NH(3)-dependent NAD(+) synthetase (277 aa).

Position 47-54 (glycine 47–serine 54) interacts with ATP. Residue aspartate 53 coordinates Mg(2+). A deamido-NAD(+)-binding site is contributed by arginine 141. Threonine 161 provides a ligand contact to ATP. Glutamate 166 is a Mg(2+) binding site. Deamido-NAD(+) is bound by residues lysine 174 and aspartate 181. Lysine 190 and threonine 212 together coordinate ATP. Histidine 261–lysine 262 contacts deamido-NAD(+).

This sequence belongs to the NAD synthetase family. As to quaternary structure, homodimer.

It carries out the reaction deamido-NAD(+) + NH4(+) + ATP = AMP + diphosphate + NAD(+) + H(+). It participates in cofactor biosynthesis; NAD(+) biosynthesis; NAD(+) from deamido-NAD(+) (ammonia route): step 1/1. In terms of biological role, catalyzes the ATP-dependent amidation of deamido-NAD to form NAD. Uses ammonia as a nitrogen source. This chain is NH(3)-dependent NAD(+) synthetase, found in Lactobacillus johnsonii (strain CNCM I-12250 / La1 / NCC 533).